A 559-amino-acid chain; its full sequence is Urocanate hydratase (559 aa).

NAD(+) is bound by residues 50–51, Q128, 174–176, D194, R199, 240–241, 261–265, 271–272, and Y320; these read GG, GMG, NA, QTSAH, and YI. C408 is a catalytic residue. Residue G490 participates in NAD(+) binding.

This sequence belongs to the urocanase family. Requires NAD(+) as cofactor.

It is found in the cytoplasm. It catalyses the reaction 4-imidazolone-5-propanoate = trans-urocanate + H2O. Its pathway is amino-acid degradation; L-histidine degradation into L-glutamate; N-formimidoyl-L-glutamate from L-histidine: step 2/3. Catalyzes the conversion of urocanate to 4-imidazolone-5-propionate. This Halalkalibacterium halodurans (strain ATCC BAA-125 / DSM 18197 / FERM 7344 / JCM 9153 / C-125) (Bacillus halodurans) protein is Urocanate hydratase.